Here is a 657-residue protein sequence, read N- to C-terminus: Glycogen debranching enzyme (657 aa).

Residue D336 is the Nucleophile of the active site. E371 functions as the Proton donor in the catalytic mechanism. The segment at 460 to 479 is disordered; sequence ANGEENRDGTNNNYSNNHGK.

This sequence belongs to the glycosyl hydrolase 13 family.

The catalysed reaction is Hydrolysis of (1-&gt;6)-alpha-D-glucosidic linkages to branches with degrees of polymerization of three or four glucose residues in limit dextrin.. It functions in the pathway glycan degradation; glycogen degradation. Removes maltotriose and maltotetraose chains that are attached by 1,6-alpha-linkage to the limit dextrin main chain, generating a debranched limit dextrin. This Escherichia coli O6:K15:H31 (strain 536 / UPEC) protein is Glycogen debranching enzyme.